An 84-amino-acid polypeptide reads, in one-letter code: FMRFamide-like neuropeptides 26 (84 aa).

The first 19 residues, 1–19 (MKVMFMLALLFSSLVATSA), serve as a signal peptide directing secretion. The propeptide occupies 20–48 (FRLPFQFFGANEDFNSGLTKRNYYESKPY). 2 positions are modified to phenylalanine amide: Phe61 and Phe82.

It belongs to the FARP (FMRFamide related peptide) family. As to expression, each flp gene is expressed in a distinct set of neurons.

The protein resides in the secreted. Its function is as follows. FMRFamides and FMRFamide-like peptides are neuropeptides. This is FMRFamide-like neuropeptides 26 from Caenorhabditis elegans.